The following is a 375-amino-acid chain: Putative glycyl-radical enzyme activating enzyme MJ0021 (375 aa).

The 224-residue stretch at 23–246 (QCVKGGKLVL…LKVIKEFKGD (224 aa)) folds into the Radical SAM core domain. Residues C38, C42, and C45 each coordinate [4Fe-4S] cluster. Residues 44–46 (YCP) and G87 contribute to the S-adenosyl-L-methionine site.

The protein belongs to the organic radical-activating enzymes family. The cofactor is [4Fe-4S] cluster.

The catalysed reaction is glycyl-[protein] + reduced [flavodoxin] + S-adenosyl-L-methionine = glycin-2-yl radical-[protein] + semiquinone [flavodoxin] + 5'-deoxyadenosine + L-methionine + H(+). This Methanocaldococcus jannaschii (strain ATCC 43067 / DSM 2661 / JAL-1 / JCM 10045 / NBRC 100440) (Methanococcus jannaschii) protein is Putative glycyl-radical enzyme activating enzyme MJ0021.